A 314-amino-acid chain; its full sequence is Probable cell division protein WhiA (314 aa).

The H-T-H motif DNA-binding region spans 275–309; it reads SLKELGELVTSGAISKSGVNHRLKKIDEFAEKIKR.

Belongs to the WhiA family.

Its function is as follows. Involved in cell division and chromosome segregation. The sequence is that of Probable cell division protein WhiA from Oceanobacillus iheyensis (strain DSM 14371 / CIP 107618 / JCM 11309 / KCTC 3954 / HTE831).